Here is a 107-residue protein sequence, read N- to C-terminus: MENTFKLLFETIEERKRNPLPESYTNYLFSKGEDKILKKIGEECTEVIIASKNNDKEELVKEMVDVLYHCFVLLAEKNIPLEDIMEEVTERNGKLSRVGDRREIDTL.

The protein belongs to the PRA-PH family.

Its subcellular location is the cytoplasm. The enzyme catalyses 1-(5-phospho-beta-D-ribosyl)-ATP + H2O = 1-(5-phospho-beta-D-ribosyl)-5'-AMP + diphosphate + H(+). It participates in amino-acid biosynthesis; L-histidine biosynthesis; L-histidine from 5-phospho-alpha-D-ribose 1-diphosphate: step 2/9. The polypeptide is Phosphoribosyl-ATP pyrophosphatase (Bacillus anthracis (strain A0248)).